A 391-amino-acid polypeptide reads, in one-letter code: Pyruvate dehydrogenase E1 component subunit alpha, testis-specific form, mitochondrial (391 aa).

The N-terminal 30 residues, 1–30, are a transit peptide targeting the mitochondrion; that stretch reads MRKMLATVLSQVFSGMVQKPALRGLLSSLK. Pyruvate is bound by residues H93, Y119, R120, A158, G166, V168, D197, G198, A199, N226, and Y228. Residues Y119 and R120 each coordinate thiamine diphosphate. Thiamine diphosphate-binding residues include G166, V168, D197, G198, A199, and N226. D197 contacts Mg(2+). Positions 226 and 228 each coordinate Mg(2+). H293 contributes to the thiamine diphosphate binding site. A phosphoserine mark is found at S294 and S296. S301 carries the post-translational modification Phosphoserine; by PDK3.

Heterotetramer of two PDHA2 and two PDHB subunits. The heterotetramer interacts with DLAT, and is part of the multimeric pyruvate dehydrogenase complex that contains multiple copies of pyruvate dehydrogenase (E1), dihydrolipoamide acetyltransferase (DLAT, E2) and lipoamide dehydrogenase (DLD, E3). These subunits are bound to an inner core composed of about 48 DLAT and 12 PDHX molecules. The cofactor is thiamine diphosphate. Mg(2+) is required as a cofactor. Testis.

It is found in the mitochondrion matrix. It catalyses the reaction N(6)-[(R)-lipoyl]-L-lysyl-[protein] + pyruvate + H(+) = N(6)-[(R)-S(8)-acetyldihydrolipoyl]-L-lysyl-[protein] + CO2. Its activity is regulated as follows. Pyruvate dehydrogenase activity is inhibited by phosphorylation of PDHA2; it is reactivated by dephosphorylation. The pyruvate dehydrogenase complex catalyzes the overall conversion of pyruvate to acetyl-CoA and CO(2), and thereby links the glycolytic pathway to the tricarboxylic cycle. The polypeptide is Pyruvate dehydrogenase E1 component subunit alpha, testis-specific form, mitochondrial (Pdha2) (Rattus norvegicus (Rat)).